A 232-amino-acid polypeptide reads, in one-letter code: Large ribosomal subunit protein uL1 (232 aa).

It belongs to the universal ribosomal protein uL1 family. As to quaternary structure, part of the 50S ribosomal subunit.

Binds directly to 23S rRNA. The L1 stalk is quite mobile in the ribosome, and is involved in E site tRNA release. Its function is as follows. Protein L1 is also a translational repressor protein, it controls the translation of the L11 operon by binding to its mRNA. This chain is Large ribosomal subunit protein uL1, found in Sinorhizobium fredii (strain NBRC 101917 / NGR234).